We begin with the raw amino-acid sequence, 459 residues long: uncharacterized protein (459 aa).

This sequence belongs to the Rab GDI family.

The protein resides in the cytoplasm. It localises to the nucleus. This is an uncharacterized protein from Schizosaccharomyces pombe (strain 972 / ATCC 24843) (Fission yeast).